Reading from the N-terminus, the 128-residue chain is Keratin-associated protein 2-1 (128 aa).

Residues 5–112 (CCGSTFSSLS…SVQSPCCRPP (108 aa)) form a 10 X 5 AA repeats of C-C-[CDPQRWG]-[APRS]-[CIPSTVD] region.

The protein belongs to the KRTAP type 2 family. Interacts with hair keratins.

In terms of biological role, in the hair cortex, hair keratin intermediate filaments are embedded in an interfilamentous matrix, consisting of hair keratin-associated proteins (KRTAP), which are essential for the formation of a rigid and resistant hair shaft through their extensive disulfide bond cross-linking with abundant cysteine residues of hair keratins. The matrix proteins include the high-sulfur and high-glycine-tyrosine keratins. The sequence is that of Keratin-associated protein 2-1 (KRTAP2-1) from Homo sapiens (Human).